The primary structure comprises 356 residues: Protein MGF 360-3L (356 aa).

An ANK repeat occupies 61–93 (KLNTALVLAVKENNEDLIMLFTEWGANINYGLL).

The protein belongs to the asfivirus MGF 360 family.

In terms of biological role, plays a role in virus cell tropism, and may be required for efficient virus replication in macrophages. This African swine fever virus (strain Badajoz 1971 Vero-adapted) (Ba71V) protein is Protein MGF 360-3L.